The primary structure comprises 99 residues: A-type ATP synthase subunit F (99 aa).

Belongs to the V-ATPase F subunit family. Has multiple subunits with at least A(3), B(3), C, D, E, F, H, I and proteolipid K(x).

The protein localises to the cell membrane. Component of the A-type ATP synthase that produces ATP from ADP in the presence of a proton gradient across the membrane. This is A-type ATP synthase subunit F from Methanococcus maripaludis (strain DSM 14266 / JCM 13030 / NBRC 101832 / S2 / LL).